Reading from the N-terminus, the 498-residue chain is XK-related protein 4 (498 aa).

Residues 24 to 46 (SEHSGSVQGLHPGAQPDSAGAGD) are disordered. 2 helical membrane passes run 81-101 (CLWI…DVWL) and 111-131 (YWWF…VQLF). Positions 166–203 (SHGDVTAQHHPATPQRQASTASRNTTTNSTASTGLGPR) are disordered. The span at 183–198 (ASTASRNTTTNSTAST) shows a compositional bias: low complexity. Helical transmembrane passes span 302–322 (LFIY…LWYL) and 332–352 (FAVP…VFML).

This sequence belongs to the XK family.

The protein localises to the cell membrane. It catalyses the reaction a 1,2-diacyl-sn-glycero-3-phospho-L-serine(in) = a 1,2-diacyl-sn-glycero-3-phospho-L-serine(out). Its function is as follows. Phospholipid scramblase that promotes phosphatidylserine exposure on apoptotic cell surface. Phosphatidylserine is a specific marker only present at the surface of apoptotic cells and acts as a specific signal for engulfment. In Tetraodon nigroviridis (Spotted green pufferfish), this protein is XK-related protein 4.